The sequence spans 127 residues: ALK and LTK ligand 1 (127 aa).

The signal sequence occupies residues 1 to 27 (MWLTKPSTPVSALLLLALALSPPGTQG). 2 cysteine pairs are disulfide-bonded: Cys88/Cys124 and Cys102/Cys111.

Belongs to the ALKAL family.

It localises to the secreted. The protein localises to the cell membrane. Its function is as follows. Cytokine that acts as a physiological ligand for receptor tyrosine kinase LTK, leading to its activation. Monomeric ALKAL1 binds to LTK, leading to LTK homodimerization and activation. In contrast to ALKAL2, does not act as a potent physiological ligand for ALK. This chain is ALK and LTK ligand 1, found in Mus musculus (Mouse).